The sequence spans 228 residues: ATP-dependent dethiobiotin synthetase BioD (228 aa).

An ATP-binding site is contributed by 12–17 (DVGKTY). Residue Thr16 coordinates Mg(2+). Residue Lys37 is part of the active site. ATP-binding positions include Asp53, 114–117 (EGMG), 174–175 (ND), 203–205 (PFI), and Asn210. Residues Asp53 and Glu114 each contribute to the Mg(2+) site.

The protein belongs to the dethiobiotin synthetase family. Homodimer. Mg(2+) serves as cofactor.

It localises to the cytoplasm. It carries out the reaction (7R,8S)-7,8-diammoniononanoate + CO2 + ATP = (4R,5S)-dethiobiotin + ADP + phosphate + 3 H(+). The protein operates within cofactor biosynthesis; biotin biosynthesis; biotin from 7,8-diaminononanoate: step 1/2. Catalyzes a mechanistically unusual reaction, the ATP-dependent insertion of CO2 between the N7 and N8 nitrogen atoms of 7,8-diaminopelargonic acid (DAPA, also called 7,8-diammoniononanoate) to form a ureido ring. The chain is ATP-dependent dethiobiotin synthetase BioD from Nitrosopumilus maritimus (strain SCM1).